A 267-amino-acid chain; its full sequence is tRNA pseudouridine synthase A (267 aa).

Aspartate 54 functions as the Nucleophile in the catalytic mechanism. Tyrosine 112 provides a ligand contact to substrate.

This sequence belongs to the tRNA pseudouridine synthase TruA family. As to quaternary structure, homodimer.

The catalysed reaction is uridine(38/39/40) in tRNA = pseudouridine(38/39/40) in tRNA. Formation of pseudouridine at positions 38, 39 and 40 in the anticodon stem and loop of transfer RNAs. The polypeptide is tRNA pseudouridine synthase A (Bordetella avium (strain 197N)).